Consider the following 227-residue polypeptide: Ribonuclease 3 (227 aa).

Residues 3-130 (TNAISKIIKY…LIGAIYLDGG (128 aa)) form the RNase III domain. Position 43 (glutamate 43) interacts with Mg(2+). Residue aspartate 47 is part of the active site. Mg(2+)-binding residues include asparagine 116 and glutamate 119. Glutamate 119 is a catalytic residue. Positions 155–224 (DAKTILQEWA…ASLMLAKINY (70 aa)) constitute a DRBM domain.

This sequence belongs to the ribonuclease III family. As to quaternary structure, homodimer. Mg(2+) is required as a cofactor.

Its subcellular location is the cytoplasm. The enzyme catalyses Endonucleolytic cleavage to 5'-phosphomonoester.. Its function is as follows. Digests double-stranded RNA. Involved in the processing of primary rRNA transcript to yield the immediate precursors to the large and small rRNAs (23S and 16S). Processes some mRNAs, and tRNAs when they are encoded in the rRNA operon. Processes pre-crRNA and tracrRNA of type II CRISPR loci if present in the organism. The protein is Ribonuclease 3 of Ehrlichia ruminantium (strain Welgevonden).